Here is a 157-residue protein sequence, read N- to C-terminus: Endoribonuclease YbeY (157 aa).

Residues histidine 121, histidine 125, and histidine 131 each contribute to the Zn(2+) site.

This sequence belongs to the endoribonuclease YbeY family. It depends on Zn(2+) as a cofactor.

The protein localises to the cytoplasm. Its function is as follows. Single strand-specific metallo-endoribonuclease involved in late-stage 70S ribosome quality control and in maturation of the 3' terminus of the 16S rRNA. The sequence is that of Endoribonuclease YbeY from Salinispora tropica (strain ATCC BAA-916 / DSM 44818 / JCM 13857 / NBRC 105044 / CNB-440).